We begin with the raw amino-acid sequence, 721 residues long: Ribosomal RNA large subunit methyltransferase K/L (721 aa).

The THUMP domain occupies Gly56–Leu167.

Belongs to the methyltransferase superfamily. RlmKL family.

The protein resides in the cytoplasm. The catalysed reaction is guanosine(2445) in 23S rRNA + S-adenosyl-L-methionine = N(2)-methylguanosine(2445) in 23S rRNA + S-adenosyl-L-homocysteine + H(+). It carries out the reaction guanosine(2069) in 23S rRNA + S-adenosyl-L-methionine = N(2)-methylguanosine(2069) in 23S rRNA + S-adenosyl-L-homocysteine + H(+). Functionally, specifically methylates the guanine in position 2445 (m2G2445) and the guanine in position 2069 (m7G2069) of 23S rRNA. The polypeptide is Ribosomal RNA large subunit methyltransferase K/L (Marinomonas sp. (strain MWYL1)).